Consider the following 403-residue polypeptide: Zinc metalloproteinase nas-8 (403 aa).

An N-terminal signal peptide occupies residues 1 to 29; that stretch reads MRRNDLLNNKITIFLSSLSLFVIIIPIYA. A propeptide spanning residues 30 to 111 is cleaved from the precursor; the sequence is AEKDLLPPST…DPKNSESLRR (82 aa). The 196-residue stretch at 112-307 folds into the Peptidase M12A domain; the sequence is NGVITGTRKW…LKMNLMYQCS (196 aa). Disulfide bonds link Cys-154-Cys-306, Cys-176-Cys-195, Cys-338-Cys-372, Cys-345-Cys-365, and Cys-352-Cys-369. His-203 contributes to the Zn(2+) binding site. The active site involves Glu-204. His-207 and His-213 together coordinate Zn(2+). A ShKT domain is found at 338 to 372; it reads CRDRTNLCWRWIDRCKSFFFEQIMKEFCSLSCGYC. An N-linked (GlcNAc...) asparagine glycan is attached at Asn-386.

Requires Zn(2+) as cofactor.

The protein resides in the secreted. It catalyses the reaction Hydrolysis of peptide bonds in substrates containing five or more amino acids, preferentially with Ala in P1', and Pro in P2'.. Metalloprotease. The chain is Zinc metalloproteinase nas-8 (nas-8) from Caenorhabditis elegans.